The chain runs to 303 residues: Mesenteric estrogen-dependent adipogenesis protein (303 aa).

In terms of tissue distribution, highly expressed in the visceral fat depot.

The protein resides in the cytoplasm. Involved in processes that promote adipocyte differentiation, lipid accumulation, and glucose uptake in mature adipocytes. This chain is Mesenteric estrogen-dependent adipogenesis protein (MEDAG), found in Homo sapiens (Human).